A 400-amino-acid chain; its full sequence is MSQTNGTHTKKAVHFGAGNIGRGFVACFLHNSGYEVVFADVTDRTCDALNNQTSYKVIEVGAEGTEEKTITNYRAINSKTKEDELLQEIATADVVTCSVGPNILKFIAPVIAKGLDMRSEELKPAAVIACENAIGATDTLAEHIKEHLPATRVEDLSTRARFANSAIDRIVPAQDPNSGLDVKLEKFYEWVVDRTPFADHEVPSIEGIHWVDNLEPYIERKLYTVNTGHATAAYHGYNRQKRTVYDALQDREIQSEVRRALENTSKLITAKHGINPEEQQAYVRKIMTRIGNPHLEDAVERVGRAPLRKLSRKERFVGPAAELAEKGEDCSALLDAAEMALRFQNVEEDAESKELAKIMAENSAEQVVSQVCGLQPSEKLYPKMVEIVHRVQQDSMDDTE.

An NAD(+)-binding site is contributed by 12-23 (AVHFGAGNIGRG). Residue K221 is part of the active site.

The protein belongs to the mannitol dehydrogenase family. As to quaternary structure, monomer.

The enzyme catalyses D-mannitol 1-phosphate + NAD(+) = beta-D-fructose 6-phosphate + NADH + H(+). In terms of biological role, catalyzes the NAD(H)-dependent interconversion of D-fructose 6-phosphate and D-mannitol 1-phosphate in the mannitol metabolic pathway. In Pyricularia oryzae (strain Y34) (Rice blast fungus), this protein is Mannitol-1-phosphate 5-dehydrogenase.